We begin with the raw amino-acid sequence, 65 residues long: Large ribosomal subunit protein bL35 (65 aa).

The disordered stretch occupies residues 1–26; it reads MPKIKTVRGAAKRFKKTASGGFKRKQ. A compositionally biased stretch (basic residues) spans 10-26; it reads AAKRFKKTASGGFKRKQ.

Belongs to the bacterial ribosomal protein bL35 family.

The polypeptide is Large ribosomal subunit protein bL35 (Actinobacillus pleuropneumoniae serotype 7 (strain AP76)).